Here is a 284-residue protein sequence, read N- to C-terminus: Non-selective voltage-gated ion channel VDAC3 (284 aa).

Cysteine 2 is subject to N-acetylcysteine. Threonine 4 is subject to Phosphothreonine. Lysine 12, lysine 15, and lysine 20 each carry N6-acetyllysine. The next 2 membrane-spanning stretches (beta stranded) occupy residues 26–35 (MVKIDLKTKS) and 39–48 (VMEFSTSGHA). A Glycyl lysine isopeptide (Lys-Gly) (interchain with G-Cter in ubiquitin) cross-link involves residue lysine 54. The next 3 membrane-spanning stretches (beta stranded) occupy residues 55–65 (ASGNLETKYKV), 70–77 (LTFTQKWN), and 81–90 (TLGTEISWEN). At lysine 91 the chain carries N6-acetyllysine. Residues 96–105 (LKLTLDTIFV) form a beta stranded membrane-spanning segment. Residues lysine 110 and lysine 111 each participate in a glycyl lysine isopeptide (Lys-Gly) (interchain with G-Cter in ubiquitin) cross-link. 10 beta stranded membrane passes run 112–121 (SGKLKASYKR), 124–131 (FSVGSNVD), 138–146 (TIYGWAVLA), 151–159 (LAGYQMSFD), 164–176 (KLSQ…GYKA), 179–186 (FQLHTHVN), 190–199 (EFGGSIYQKV), 203–212 (IETSINLAWT), 219–228 (RFGIAAKYML), and 232–239 (TSLSAKVN). Phosphoserine is present on serine 242. NAD(+)-binding positions include 243 to 245 (LIG) and 261 to 265 (SALID). 2 consecutive transmembrane segments (beta stranded) span residues 243 to 252 (LIGLGYTQTL) and 255 to 264 (GVKLTLSALI). The residue at position 267 (lysine 267) is an N6-acetyllysine; alternate. Residue lysine 267 forms a Glycyl lysine isopeptide (Lys-Gly) (interchain with G-Cter in ubiquitin); alternate linkage. The beta stranded transmembrane segment at 274–283 (HKVGLGFELE) threads the bilayer.

Belongs to the eukaryotic mitochondrial porin family. As to quaternary structure, interacts with ARMC12 in a TBC1D21-dependent manner. Interacts with MISFA. Ubiquitinated by PRKN during mitophagy, leading to its degradation and enhancement of mitophagy. Deubiquitinated by USP30.

It localises to the mitochondrion outer membrane. The protein localises to the membrane. It carries out the reaction chloride(in) = chloride(out). The enzyme catalyses K(+)(in) = K(+)(out). Non-selective voltage-gated ion channel that mediates the transport of anions and cations through the mitochondrion outer membrane and plasma membrane. Forms a high-conducting channel with a stable open state and a voltage-induced closure with a mild preference for anions over cations. Involved in male fertility and sperm mitochondrial sheath formation. This Pongo abelii (Sumatran orangutan) protein is Non-selective voltage-gated ion channel VDAC3.